The sequence spans 48 residues: Large ribosomal subunit protein eL40 (48 aa).

This sequence belongs to the eukaryotic ribosomal protein eL40 family.

The sequence is that of Large ribosomal subunit protein eL40 from Methanoregula boonei (strain DSM 21154 / JCM 14090 / 6A8).